A 232-amino-acid chain; its full sequence is Large ribosomal subunit protein uL10c (232 aa).

The N-terminal 52 residues, 1–52, are a transit peptide targeting the chloroplast; it reads MESTLFLSKPLPTTIKTTTHSLSSVYPNPFKPNNLTFPRTTHKHPTTTTITA.

The protein belongs to the universal ribosomal protein uL10 family. In terms of assembly, component of the chloroplast large ribosomal subunit (LSU). Mature 70S chloroplast ribosomes of higher plants consist of a small (30S) and a large (50S) subunit. The 30S small subunit contains 1 molecule of ribosomal RNA (16S rRNA) and 24 different proteins. The 50S large subunit contains 3 rRNA molecules (23S, 5S and 4.5S rRNA) and 33 different proteins.

It is found in the plastid. The protein localises to the chloroplast. In terms of biological role, component of the chloroplast ribosome (chloro-ribosome), a dedicated translation machinery responsible for the synthesis of chloroplast genome-encoded proteins, including proteins of the transcription and translation machinery and components of the photosynthetic apparatus. The chain is Large ribosomal subunit protein uL10c (RPL10) from Spinacia oleracea (Spinach).